A 287-amino-acid chain; its full sequence is Hydroxysteroid 11-beta-dehydrogenase 1-like protein (287 aa).

A signal peptide spans 1-15 (MKVLLLTGLGALFFA). NADP(+)-binding positions include 36–62 (GASA…TAHT), 87–88 (DM), and 114–116 (NHI). S165 is a binding site for substrate. The active-site Proton acceptor is Y178. NADP(+) is bound by residues 178–182 (YSAAK) and 211–217 (GLRDRAS).

This sequence belongs to the short-chain dehydrogenases/reductases (SDR) family.

The protein resides in the secreted. It carries out the reaction cortisone + NADPH + H(+) = cortisol + NADP(+). Unidirectional NADP(+)-dependent cortisol dehydrogenase (in vitro). This is Hydroxysteroid 11-beta-dehydrogenase 1-like protein (HSD11B1L) from Macaca fascicularis (Crab-eating macaque).